Here is a 628-residue protein sequence, read N- to C-terminus: Chaperone protein HtpG (628 aa).

Residues 1 to 337 (MSEKKYTFET…SADLPLNVSR (337 aa)) are a; substrate-binding. The interval 338–554 (EILQHNKVID…DYGMSLHMQK (217 aa)) is b. Residues 555–628 (MMEEAGQGFM…FVKLVNKYIR (74 aa)) are c.

It belongs to the heat shock protein 90 family. Homodimer.

Its subcellular location is the cytoplasm. In terms of biological role, molecular chaperone. Has ATPase activity. This Francisella tularensis subsp. novicida (strain U112) protein is Chaperone protein HtpG.